The primary structure comprises 278 residues: MSQAYDPSQEGAKMSYAKDMSYGDYLHMDALLATHHPQSDAHDEMLFIIQHQTSELWMRLVLHELRAARALLLAGGDFRPAFKMLTRVARIFDQLNSAWDVLRTMTPSDYTTFRNALGNSSGFQSHQYRLIEYMLGNRNTAMMKVHEHRPELHAMLAAELEQPSLYHVALRALAAKTGASFAPEVYRMDNPHSADAAVQAAWRQVYEDPAKYWDLYELGEKLVDLEDYFRRWRFNHVTTVERVIGFKRGTGGTSGVQYLRRMLEVELFPELWHLRGDL.

Residues 47–51 (FIIQH), tyrosine 110, and arginine 114 contribute to the substrate site. Histidine 236 contributes to the heme binding site. Substrate is bound at residue threonine 250.

It belongs to the tryptophan 2,3-dioxygenase family. As to quaternary structure, homotetramer. Heme serves as cofactor.

It carries out the reaction L-tryptophan + O2 = N-formyl-L-kynurenine. The protein operates within amino-acid degradation; L-tryptophan degradation via kynurenine pathway; L-kynurenine from L-tryptophan: step 1/2. Functionally, heme-dependent dioxygenase that catalyzes the oxidative cleavage of the L-tryptophan (L-Trp) pyrrole ring and converts L-tryptophan to N-formyl-L-kynurenine. Catalyzes the oxidative cleavage of the indole moiety. This Ruegeria pomeroyi (strain ATCC 700808 / DSM 15171 / DSS-3) (Silicibacter pomeroyi) protein is Tryptophan 2,3-dioxygenase.